A 404-amino-acid polypeptide reads, in one-letter code: Tryptophan synthase beta chain (404 aa).

An N6-(pyridoxal phosphate)lysine modification is found at K94.

Belongs to the TrpB family. Tetramer of two alpha and two beta chains. The cofactor is pyridoxal 5'-phosphate.

The catalysed reaction is (1S,2R)-1-C-(indol-3-yl)glycerol 3-phosphate + L-serine = D-glyceraldehyde 3-phosphate + L-tryptophan + H2O. Its pathway is amino-acid biosynthesis; L-tryptophan biosynthesis; L-tryptophan from chorismate: step 5/5. The beta subunit is responsible for the synthesis of L-tryptophan from indole and L-serine. This is Tryptophan synthase beta chain from Staphylococcus saprophyticus subsp. saprophyticus (strain ATCC 15305 / DSM 20229 / NCIMB 8711 / NCTC 7292 / S-41).